The sequence spans 488 residues: Malonate-semialdehyde dehydrogenase (488 aa).

7 residues coordinate NAD(+): A150, F152, K176, E179, R180, S229, and T251. Residue C284 is the Nucleophile of the active site. E382 contributes to the NAD(+) binding site.

Belongs to the aldehyde dehydrogenase family. IolA subfamily. Homotetramer.

It carries out the reaction 3-oxopropanoate + NAD(+) + CoA + H2O = hydrogencarbonate + acetyl-CoA + NADH + H(+). The catalysed reaction is 2-methyl-3-oxopropanoate + NAD(+) + CoA + H2O = propanoyl-CoA + hydrogencarbonate + NADH + H(+). Its pathway is polyol metabolism; myo-inositol degradation into acetyl-CoA; acetyl-CoA from myo-inositol: step 7/7. Catalyzes the oxidation of malonate semialdehyde (MSA) and methylmalonate semialdehyde (MMSA) into acetyl-CoA and propanoyl-CoA, respectively. Is involved in a myo-inositol catabolic pathway. Bicarbonate, and not CO2, is the end-product of the enzymatic reaction. The polypeptide is Malonate-semialdehyde dehydrogenase (Listeria innocua serovar 6a (strain ATCC BAA-680 / CLIP 11262)).